Here is a 267-residue protein sequence, read N- to C-terminus: Large ribosomal subunit protein uL2c (267 aa).

This sequence belongs to the universal ribosomal protein uL2 family. Part of the 50S ribosomal subunit.

The protein resides in the plastid. Its subcellular location is the apicoplast. The protein is Large ribosomal subunit protein uL2c (rpl2) of Toxoplasma gondii.